Consider the following 336-residue polypeptide: Pyridoxal 5'-phosphate synthase subunit PdxS (336 aa).

D-ribose 5-phosphate is bound at residue Asp30. Lys87 acts as the Schiff-base intermediate with D-ribose 5-phosphate in catalysis. Gly159 contacts D-ribose 5-phosphate. Residue Arg171 coordinates D-glyceraldehyde 3-phosphate. D-ribose 5-phosphate-binding positions include Gly257 and 278–279 (GS).

This sequence belongs to the PdxS/SNZ family. In terms of assembly, in the presence of PdxT, forms a dodecamer of heterodimers.

The enzyme catalyses aldehydo-D-ribose 5-phosphate + D-glyceraldehyde 3-phosphate + L-glutamine = pyridoxal 5'-phosphate + L-glutamate + phosphate + 3 H2O + H(+). The protein operates within cofactor biosynthesis; pyridoxal 5'-phosphate biosynthesis. Functionally, catalyzes the formation of pyridoxal 5'-phosphate from ribose 5-phosphate (RBP), glyceraldehyde 3-phosphate (G3P) and ammonia. The ammonia is provided by the PdxT subunit. Can also use ribulose 5-phosphate and dihydroxyacetone phosphate as substrates, resulting from enzyme-catalyzed isomerization of RBP and G3P, respectively. The sequence is that of Pyridoxal 5'-phosphate synthase subunit PdxS from Thermoplasma acidophilum (strain ATCC 25905 / DSM 1728 / JCM 9062 / NBRC 15155 / AMRC-C165).